The following is a 745-amino-acid chain: Chitin synthase D (745 aa).

5 helical membrane passes run leucine 26 to leucine 46, valine 55 to leucine 75, threonine 412 to asparagine 432, leucine 434 to glycine 454, and leucine 464 to isoleucine 484. 2 disordered regions span residues threonine 613–glutamine 635 and isoleucine 672–valine 745. Residues asparagine 707–glutamate 720 show a composition bias toward polar residues.

The protein belongs to the chitin synthase family. Class VI subfamily.

It is found in the cell membrane. It catalyses the reaction [(1-&gt;4)-N-acetyl-beta-D-glucosaminyl](n) + UDP-N-acetyl-alpha-D-glucosamine = [(1-&gt;4)-N-acetyl-beta-D-glucosaminyl](n+1) + UDP + H(+). In terms of biological role, polymerizes chitin, a structural polymer of the cell wall and septum, by transferring the sugar moiety of UDP-GlcNAc to the non-reducing end of the growing chitin polymer. The chain is Chitin synthase D (chsD) from Aspergillus fumigatus (strain ATCC MYA-4609 / CBS 101355 / FGSC A1100 / Af293) (Neosartorya fumigata).